We begin with the raw amino-acid sequence, 255 residues long: Dehydrogenase/reductase SDR family member 11 (255 aa).

The first 23 residues, 1–23, serve as a signal peptide directing secretion; sequence MERWTGRVALVTGASVGIGAAVA. NADP(+)-binding positions include 13–18, 38–39, Glu44, 65–66, and Asn92; these read GASVGI, RS, and DL. Substrate-binding residues include Ser146 and Tyr161. NADP(+)-binding positions include Tyr161, Lys165, 196 to 199, and Lys203; that span reads VETG. The active-site Proton acceptor is the Tyr161.

The protein belongs to the short-chain dehydrogenases/reductases (SDR) family.

It is found in the secreted. It carries out the reaction a 3beta-hydroxysteroid + NADP(+) = a 3-oxosteroid + NADPH + H(+). It catalyses the reaction 17beta-estradiol + NAD(+) = estrone + NADH + H(+). The enzyme catalyses 17beta-estradiol + NADP(+) = estrone + NADPH + H(+). Its pathway is steroid biosynthesis; estrogen biosynthesis. With respect to regulation, inhibited by flavonoids including apigenin, luteolin, genistein, kaempferol and quercetin and also by carbenoxolone, zearalenone, glycyrrhetinic, curcumin and flufenamic acid. Functionally, catalyzes the conversion of the 17-keto group of estrone, 4- and 5-androstenes and 5-alpha-androstanes into their 17-beta-hydroxyl metabolites and the conversion of the 3-keto group of 3-, 3,17- and 3,20- diketosteroids into their 3-hydroxyl metabolites. Exhibits reductive 3-beta-hydroxysteroid dehydrogenase activity toward 5-beta-androstanes, 5-beta-pregnanes, 4-pregnenes and bile acids. May also reduce endogenous and exogenous alpha-dicarbonyl compounds and xenobiotic alicyclic ketones. The chain is Dehydrogenase/reductase SDR family member 11 (DHRS11) from Gallus gallus (Chicken).